The sequence spans 348 residues: Dihydroorotase (348 aa).

Residues H17 and H19 each contribute to the Zn(2+) site. Residues H19–R21 and N45 contribute to the substrate site. Positions 103, 140, and 178 each coordinate Zn(2+). K103 is modified (N6-carboxylysine). H140 serves as a coordination point for substrate. Substrate is bound at residue L223. Residue D251 participates in Zn(2+) binding. The active site involves D251. Residues H255 and A267 each contribute to the substrate site.

This sequence belongs to the metallo-dependent hydrolases superfamily. DHOase family. Class II DHOase subfamily. In terms of assembly, homodimer. The cofactor is Zn(2+).

The catalysed reaction is (S)-dihydroorotate + H2O = N-carbamoyl-L-aspartate + H(+). The protein operates within pyrimidine metabolism; UMP biosynthesis via de novo pathway; (S)-dihydroorotate from bicarbonate: step 3/3. Its function is as follows. Catalyzes the reversible cyclization of carbamoyl aspartate to dihydroorotate. The chain is Dihydroorotase from Salmonella heidelberg (strain SL476).